The following is a 217-amino-acid chain: uncharacterized protein (217 aa).

This is an uncharacterized protein from Escherichia coli.